A 155-amino-acid polypeptide reads, in one-letter code: Aspartate carbamoyltransferase regulatory chain (155 aa).

Positions 113, 118, 141, and 144 each coordinate Zn(2+).

Belongs to the PyrI family. As to quaternary structure, contains catalytic and regulatory chains. The cofactor is Zn(2+).

Involved in allosteric regulation of aspartate carbamoyltransferase. This chain is Aspartate carbamoyltransferase regulatory chain, found in Methanococcus aeolicus (strain ATCC BAA-1280 / DSM 17508 / OCM 812 / Nankai-3).